The primary structure comprises 576 residues: Citrinin biosynthesis transcriptional activator ctnR (576 aa).

The segment at 1-27 (MLSHEMASTAHRQPSRPTTRQRQRTGR) is disordered. The segment at residues 29–56 (CEECRRRKLRCDGQQPRCGVCVDSGVTC) is a DNA-binding region (zn(2)-C6 fungal-type). Residues 102-148 (STPLTNDHHDGCSVSSASSRSDSNPPPTVSEPDMSLPNTTTSVSSAP) form a disordered region. The span at 114 to 124 (SVSSASSRSDS) shows a compositional bias: low complexity. Polar residues predominate over residues 137 to 148 (LPNTTTSVSSAP).

The protein localises to the nucleus. Its function is as follows. Transcription factor that regulates the expression of the gene cluster that mediates the biosynthesis of the mycotoxin citrinin, a hepato-nephrotoxic compound to humans due to inhibition of respiration complex III. The protein is Citrinin biosynthesis transcriptional activator ctnR of Monascus purpureus (Red mold).